A 656-amino-acid polypeptide reads, in one-letter code: Probable serine/threonine-protein kinase sky1 (656 aa).

The tract at residues 1–127 is disordered; it reads MSDIQQDSTS…KQGGYHPVRR (127 aa). The span at 16 to 48 shows a compositional bias: gly residues; it reads TSLGGTSLGGTSLGGTSLGGTSLGGTSLGGTSL. Low complexity-rich tracts occupy residues 49–64 and 72–89; these read GGSTTTSTTTPKSTNS and TSSNNNNNNNNNNNNNNE. The span at 96-108 shows a compositional bias: polar residues; that stretch reads AGSSNKSFMPLNN. A Protein kinase domain is found at 135–648; the sequence is YQVVDKLGWG…AKDCLNHTWL (514 aa). 141-149 serves as a coordination point for ATP; it reads LGWGHFSTV. A disordered region spans residues 157-185; the sequence is TPITTSSSSSSTTTTTTSSSSNGNGNGNG. Residues 160 to 179 show a composition bias toward low complexity; it reads TTSSSSSSTTTTTTSSSSNG. K197 serves as a coordination point for ATP. The active-site Proton acceptor is the D298. The segment at 330–454 is disordered; sequence RTSSSNKQSQ…TTATATATTT (125 aa). The span at 332-355 shows a compositional bias: low complexity; it reads SSSNKQSQQQQQPQQQQSQQNIND. Composition is skewed to basic and acidic residues over residues 383–401 and 413–440; these read SNRDRDNNKNKNIKKDDNK and ENTDNKDLNSSEENKKEEEQQQNKKEEP. The span at 441-454 shows a compositional bias: low complexity; that stretch reads TTTTTTATATATTT.

The protein belongs to the protein kinase superfamily. CMGC Ser/Thr protein kinase family.

The catalysed reaction is L-seryl-[protein] + ATP = O-phospho-L-seryl-[protein] + ADP + H(+). It carries out the reaction L-threonyl-[protein] + ATP = O-phospho-L-threonyl-[protein] + ADP + H(+). In Dictyostelium discoideum (Social amoeba), this protein is Probable serine/threonine-protein kinase sky1 (sky1).